The primary structure comprises 320 residues: Cell division protein FtsQ (320 aa).

The tract at residues 1–24 (MAQTIKRGGKGVRRATAARSAQRK) is disordered. Residues 1–52 (MAQTIKRGGKGVRRATAARSAQRKVQTARQQTGSVLDSVLRWLPFSEETLHR) are Cytoplasmic-facing. A helical transmembrane segment spans residues 53–73 (ILMTLILAAAAGLVWTVAVMA). The Periplasmic segment spans residues 74–320 (GIPALVSEQA…RAASAKSDEG (247 aa)). The POTRA domain occupies 92-160 (FKVSHLEVRG…DTLVIDIVER (69 aa)). Residues 296–320 (AAEKRAEEQARAEAKRAASAKSDEG) form a disordered region.

This sequence belongs to the FtsQ/DivIB family. FtsQ subfamily.

It localises to the cell inner membrane. Its function is as follows. Essential cell division protein. The sequence is that of Cell division protein FtsQ from Novosphingobium aromaticivorans (strain ATCC 700278 / DSM 12444 / CCUG 56034 / CIP 105152 / NBRC 16084 / F199).